The sequence spans 290 residues: Small ribosomal subunit biogenesis GTPase RsgA (290 aa).

One can recognise a CP-type G domain in the interval 62 to 219; that stretch reads DNYLIRPQVA…VVDTPGFSTL (158 aa). GTP-binding positions include 111–114 and 162–170; these read NKID and GPSGVGKST. Zn(2+) is bound by residues C243, C248, H250, and C256.

Belongs to the TRAFAC class YlqF/YawG GTPase family. RsgA subfamily. Monomer. Associates with 30S ribosomal subunit, binds 16S rRNA. It depends on Zn(2+) as a cofactor.

The protein localises to the cytoplasm. Its function is as follows. One of several proteins that assist in the late maturation steps of the functional core of the 30S ribosomal subunit. Helps release RbfA from mature subunits. May play a role in the assembly of ribosomal proteins into the subunit. Circularly permuted GTPase that catalyzes slow GTP hydrolysis, GTPase activity is stimulated by the 30S ribosomal subunit. This is Small ribosomal subunit biogenesis GTPase RsgA from Clostridium novyi (strain NT).